The following is a 180-amino-acid chain: Negative modulator of initiation of replication (180 aa).

The tract at residues 115–119 is interaction with DNA; sequence RTRVY.

Belongs to the SeqA family. In terms of assembly, homodimer. Polymerizes to form helical filaments.

The protein localises to the cytoplasm. Functionally, negative regulator of replication initiation, which contributes to regulation of DNA replication and ensures that replication initiation occurs exactly once per chromosome per cell cycle. Binds to pairs of hemimethylated GATC sequences in the oriC region, thus preventing assembly of replication proteins and re-initiation at newly replicated origins. Repression is relieved when the region becomes fully methylated. This chain is Negative modulator of initiation of replication, found in Aliivibrio fischeri (strain ATCC 700601 / ES114) (Vibrio fischeri).